Consider the following 394-residue polypeptide: Elongation factor Tu (394 aa).

The 195-residue stretch at 10–204 (KPHVNVGTIG…AVDEWIPTPE (195 aa)) folds into the tr-type G domain. The G1 stretch occupies residues 19–26 (GHIDHGKT). Position 19 to 26 (19 to 26 (GHIDHGKT)) interacts with GTP. Thr-26 is a binding site for Mg(2+). The segment at 60–64 (GITIN) is G2. The tract at residues 81–84 (DCPG) is G3. Residues 81–85 (DCPGH) and 136–139 (NKCD) each bind GTP. The tract at residues 136-139 (NKCD) is G4. Residues 174–176 (SAL) are G5.

Belongs to the TRAFAC class translation factor GTPase superfamily. Classic translation factor GTPase family. EF-Tu/EF-1A subfamily. As to quaternary structure, monomer.

It is found in the cytoplasm. It carries out the reaction GTP + H2O = GDP + phosphate + H(+). In terms of biological role, GTP hydrolase that promotes the GTP-dependent binding of aminoacyl-tRNA to the A-site of ribosomes during protein biosynthesis. This Mycoplasma pneumoniae (strain ATCC 29342 / M129 / Subtype 1) (Mycoplasmoides pneumoniae) protein is Elongation factor Tu.